A 305-amino-acid chain; its full sequence is Translation initiation factor eIF2B subunit alpha (305 aa).

Belongs to the eIF-2B alpha/beta/delta subunits family. As to quaternary structure, component of the translation initiation factor 2B (eIF2B) complex which is a heterodecamer of two sets of five different subunits: alpha, beta, gamma, delta and epsilon. Subunits alpha, beta and delta comprise a regulatory subcomplex and subunits epsilon and gamma comprise a catalytic subcomplex. Within the complex, the hexameric regulatory complex resides at the center, with the two heterodimeric catalytic subcomplexes bound on opposite sides.

The protein resides in the cytoplasm. The protein localises to the cytosol. In terms of biological role, acts as a component of the translation initiation factor 2B (eIF2B) complex, which catalyzes the exchange of GDP for GTP on eukaryotic initiation factor 2 (eIF2) gamma subunit. Its guanine nucleotide exchange factor activity is repressed when bound to eIF2 complex phosphorylated on the alpha subunit, thereby limiting the amount of methionyl-initiator methionine tRNA available to the ribosome and consequently global translation is repressed. This chain is Translation initiation factor eIF2B subunit alpha, found in Caenorhabditis elegans.